Here is a 233-residue protein sequence, read N- to C-terminus: Large ribosomal subunit protein uL3 (233 aa).

Belongs to the universal ribosomal protein uL3 family. As to quaternary structure, part of the 50S ribosomal subunit. Forms a cluster with proteins L14 and L19.

In terms of biological role, one of the primary rRNA binding proteins, it binds directly near the 3'-end of the 23S rRNA, where it nucleates assembly of the 50S subunit. The polypeptide is Large ribosomal subunit protein uL3 (Ureaplasma urealyticum serovar 10 (strain ATCC 33699 / Western)).